Here is a 65-residue protein sequence, read N- to C-terminus: Muscarinic toxin-like protein 1 (65 aa).

4 disulfide bridges follow: C3-C24, C17-C42, C46-C57, and C58-C63.

This sequence belongs to the three-finger toxin family. Short-chain subfamily. Type C muscarinic toxin sub-subfamily. As to quaternary structure, monomer. As to expression, expressed by the venom gland.

The protein resides in the secreted. Functionally, binds weakly to the muscarinic acetylcholine receptor (CHRM). In Naja kaouthia (Monocled cobra), this protein is Muscarinic toxin-like protein 1.